The chain runs to 481 residues: MIPVILSGGSGSRLWPLSRKQYPKQFLALTGDDTLFQQTIKRLAFDGMQAPLLVCNKEHRFIVQEQLEAQNLASQAILLEPFGRNTAPAVAIAAMKLVAEGRDELLLILPADHVIEDQRAFQQALALATNAAEKGEMVLFGIPASRPETGYGYIRASADAQLPEGVSRVQSFVEKPDEARAREFVAAGGYYWNSGMFLFRASRYLEELKKHDADIYDTCLLALERSQHDGDLVNIDAATFECCPDNSIDYAVMEKTSRACVVPLSAGWNDVGSWSSIWDVHAKDANGNVTKGDVLVHDSHNCLVHGNGKLVSVIGLEDIVVVETKDAMMIAHKDRVQDVKHVVKDLDAQGRSETQNHCEVYRPWGSYDSVDMGGRFQVKHITVKPGARLSLQMHHHRAEHWIVVSGTAQVTCDDKTFLLTENQSTYIPIASVHRLANPGKIPLEIIEVQSGSYLGEDDIERLEDVYGRTAEPALQVVAGSR.

The protein belongs to the mannose-6-phosphate isomerase type 2 family. As to quaternary structure, monomer. Requires Co(2+) as cofactor.

It carries out the reaction D-mannose 6-phosphate = D-fructose 6-phosphate. The catalysed reaction is alpha-D-mannose 1-phosphate + GTP + H(+) = GDP-alpha-D-mannose + diphosphate. It participates in nucleotide-sugar biosynthesis; GDP-alpha-D-mannose biosynthesis; GDP-alpha-D-mannose from alpha-D-mannose 1-phosphate (GTP route): step 1/1. The protein operates within nucleotide-sugar biosynthesis; GDP-alpha-D-mannose biosynthesis; alpha-D-mannose 1-phosphate from D-fructose 6-phosphate: step 1/2. Functionally, produces a precursor for alginate polymerization. The alginate layer provides a protective barrier against host immune defenses and antibiotics. The polypeptide is Alginate biosynthesis protein AlgA (algA) (Pseudomonas aeruginosa (strain ATCC 15692 / DSM 22644 / CIP 104116 / JCM 14847 / LMG 12228 / 1C / PRS 101 / PAO1)).